Here is a 512-residue protein sequence, read N- to C-terminus: Kynurenine 3-monooxygenase (512 aa).

The protein belongs to the aromatic-ring hydroxylase family. KMO subfamily. Requires FAD as cofactor.

The protein resides in the mitochondrion outer membrane. The enzyme catalyses L-kynurenine + NADPH + O2 + H(+) = 3-hydroxy-L-kynurenine + NADP(+) + H2O. It functions in the pathway cofactor biosynthesis; NAD(+) biosynthesis; quinolinate from L-kynurenine: step 1/3. Functionally, catalyzes the hydroxylation of L-kynurenine (L-Kyn) to form 3-hydroxy-L-kynurenine (L-3OHKyn). Required for synthesis of quinolinic acid. In Neurospora crassa (strain ATCC 24698 / 74-OR23-1A / CBS 708.71 / DSM 1257 / FGSC 987), this protein is Kynurenine 3-monooxygenase (nic-3).